The chain runs to 461 residues: ERBB receptor feedback inhibitor 1 (461 aa).

Ser2 is subject to N-acetylserine. Phosphothreonine is present on residues Thr126 and Thr130. Positions 228–353 (QNRVVPDPNP…VMPPTQSFAP (126 aa)) are disordered. Residues Ser251 and Ser272 each carry the phosphoserine modification. Residues 265-274 (SSCTHRASPS) show a composition bias toward polar residues. Positions 283–292 (PPRVPIPPRP) are enriched in pro residues. The residue at position 301 (Ser301) is a Phosphoserine. Basic and acidic residues predominate over residues 311–324 (DEDRPPKVPPREPL). Polar residues predominate over residues 325 to 336 (SRSNSRTPSPKS). An interaction with EGFR and ERBB2 and regulation of EGFR activation region spans residues 333–362 (SPKSLPSYLNGVMPPTQSFAPDPKYVSSKA). Position 460 is a phosphoserine (Ser460).

This sequence belongs to the MIG6 family. Interacts with EGFR. Interacts with ERBB2. Detected in lung, in airway epithelial cells and alveolar type 2 cells (at protein level). Detected in uterus stroma, luminal epithelium and glandular epithelium.

Its subcellular location is the cytoplasm. It is found in the cell membrane. It localises to the nucleus. Negative regulator of EGFR signaling in skin morphogenesis. Acts as a negative regulator for several EGFR family members, including ERBB2, ERBB3 and ERBB4. Inhibits EGFR catalytic activity by interfering with its dimerization. Inhibits autophosphorylation of EGFR, ERBB2 and ERBB4. Important for normal keratinocyte proliferation and differentiation. Plays a role in modulating the response to steroid hormones in the uterus. Required for normal response to progesterone in the uterus and for fertility. Mediates epithelial estrogen responses in the uterus by regulating ESR1 levels and activation. Important for regulation of endometrium cell proliferation. Important for normal prenatal and perinatal lung development. The polypeptide is ERBB receptor feedback inhibitor 1 (Errfi1) (Mus musculus (Mouse)).